A 1367-amino-acid chain; its full sequence is Histone acetyltransferase HAC2 (1367 aa).

The tract at residues 110 to 151 (TSSIPGSSGSASETNSGSDITKQDFKNDSPSDSKKVQGSSTS) is disordered. Positions 111 to 127 (SSIPGSSGSASETNSGS) are enriched in low complexity. Residues 130–144 (TKQDFKNDSPSDSKK) are compositionally biased toward basic and acidic residues. 12 consecutive repeat copies span residues 188-200 (KLGT…EPMK), 223-235 (KVYS…TTTK), 251-263 (KLGT…EPMK), 286-298 (KVYS…TTTK), 314-326 (KLGT…EPMK), 349-361 (KVYS…TTTK), 377-389 (KLGT…EPMK), 418-430 (KLGT…EPMK), 432-444 (DEGS…TTNK), 459-471 (KLGI…EPMK), 473-485 (DEGT…TTNK), and 500-512 (KLGI…EPMK). Positions 188–512 (KLGTVVDIVE…IGVDIVEPMK (325 aa)) are 12 X 13 AA approximate repeats. The PHD-type zinc-finger motif lies at 688–765 (HQICSPCHSR…EYICPTCLLE (78 aa)). One can recognise a CBP/p300-type HAT domain in the interval 780–1213 (DSGAKDLPET…ILHHLHTSNK (434 aa)). Residues 903–905 (LDS), 922–923 (RT), and Trp-978 contribute to the acetyl-CoA site. Residues 1094 to 1157 (ELNYSCTRCS…QLSKVQVNGV (64 aa)) form a ZZ-type 1; degenerate zinc finger. Zn(2+) contacts are provided by Cys-1099, Cys-1102, Cys-1123, Cys-1126, Cys-1225, Cys-1228, Cys-1240, Cys-1243, Cys-1249, Cys-1252, His-1261, and His-1263. The segment at 1220 to 1273 (SSSLTCTACKKDVSTTIYFPCLLCPDYRACTGCYTKNRTLRHLHIFPTLPSANR) adopts a ZZ-type 2 zinc-finger fold. The TAZ-type zinc-finger motif lies at 1274–1359 (APSRTVMVLE…NCPVPQCRDR (86 aa)).

In terms of tissue distribution, rosette leaves, stems and flowers.

The protein resides in the nucleus. The enzyme catalyses L-lysyl-[protein] + acetyl-CoA = N(6)-acetyl-L-lysyl-[protein] + CoA + H(+). Its function is as follows. Acetyltransferase enzyme. Acetylates histones, giving a specific tag for transcriptional activation. No acetyltransferase activity found in vitro. This chain is Histone acetyltransferase HAC2 (HAC2), found in Arabidopsis thaliana (Mouse-ear cress).